Consider the following 96-residue polypeptide: MALTLADVDKIARLSRLHLTAAEKEKSLQELNDIFAMVEQMQNINTDGIEPMAHPHEAALRLREDEVTETDRAAEYQAVAPEVRNRLYIVPQVIEE.

Belongs to the GatC family. In terms of assembly, heterotrimer of A, B and C subunits.

The catalysed reaction is L-glutamyl-tRNA(Gln) + L-glutamine + ATP + H2O = L-glutaminyl-tRNA(Gln) + L-glutamate + ADP + phosphate + H(+). It carries out the reaction L-aspartyl-tRNA(Asn) + L-glutamine + ATP + H2O = L-asparaginyl-tRNA(Asn) + L-glutamate + ADP + phosphate + 2 H(+). In terms of biological role, allows the formation of correctly charged Asn-tRNA(Asn) or Gln-tRNA(Gln) through the transamidation of misacylated Asp-tRNA(Asn) or Glu-tRNA(Gln) in organisms which lack either or both of asparaginyl-tRNA or glutaminyl-tRNA synthetases. The reaction takes place in the presence of glutamine and ATP through an activated phospho-Asp-tRNA(Asn) or phospho-Glu-tRNA(Gln). The sequence is that of Glutamyl-tRNA(Gln) amidotransferase subunit C from Neisseria meningitidis serogroup A / serotype 4A (strain DSM 15465 / Z2491).